Reading from the N-terminus, the 1067-residue chain is Probable isoleucine--tRNA ligase, cytoplasmic (1067 aa).

Residues 47–57 (PFATGLPHYGH) carry the 'HIGH' region motif. Positions 604–608 (KMSKR) match the 'KMSKS' region motif. Lys607 serves as a coordination point for ATP.

The protein belongs to the class-I aminoacyl-tRNA synthetase family.

Its subcellular location is the cytoplasm. The catalysed reaction is tRNA(Ile) + L-isoleucine + ATP = L-isoleucyl-tRNA(Ile) + AMP + diphosphate. The sequence is that of Probable isoleucine--tRNA ligase, cytoplasmic (ileS) from Dictyostelium discoideum (Social amoeba).